Here is a 54-residue protein sequence, read N- to C-terminus: uncharacterized protein (54 aa).

This is an uncharacterized protein from Dictyostelium discoideum (Social amoeba).